The following is a 364-amino-acid chain: Valine dehydrogenase (364 aa).

Lys-91 is a catalytic residue. 191-197 (GVGKVGH) serves as a coordination point for NAD(+).

This sequence belongs to the Glu/Leu/Phe/Val dehydrogenases family. As to quaternary structure, homodimer.

It is found in the cytoplasm. The enzyme catalyses L-valine + NAD(+) + H2O = 3-methyl-2-oxobutanoate + NH4(+) + NADH + H(+). Its pathway is amino-acid degradation; L-valine degradation. Inhibited by pyridoxal 5'-phosphate (PLP). Its function is as follows. Oxidative deamination of branched-chain amino acids. Oxidizes L-valine and L-alpha-aminobutyric acid efficiently, and L-alanine and L-isoleucine less efficiently. D-valine and L-glutamate were not substrates for the enzyme. The catabolism of valine is the major source of fatty acid precursors for macrolide biosynthesis and a vital source of antibiotic precursors. This is Valine dehydrogenase from Streptomyces albus (strain ATCC 21838 / DSM 41398 / FERM P-419 / JCM 4703 / NBRC 107858).